A 559-amino-acid chain; its full sequence is Urocanate hydratase (559 aa).

NAD(+) is bound by residues 50–51 (GG), Q128, 174–176 (GMG), D194, R199, 240–241 (NA), 261–265 (QTSAH), 271–272 (YI), and Y320. Residue C408 is part of the active site. G490 is a binding site for NAD(+).

Belongs to the urocanase family. The cofactor is NAD(+).

It localises to the cytoplasm. The enzyme catalyses 4-imidazolone-5-propanoate = trans-urocanate + H2O. Its pathway is amino-acid degradation; L-histidine degradation into L-glutamate; N-formimidoyl-L-glutamate from L-histidine: step 2/3. Catalyzes the conversion of urocanate to 4-imidazolone-5-propionate. This chain is Urocanate hydratase, found in Halalkalibacterium halodurans (strain ATCC BAA-125 / DSM 18197 / FERM 7344 / JCM 9153 / C-125) (Bacillus halodurans).